Consider the following 395-residue polypeptide: Homoserine O-acetyltransferase (395 aa).

Residues 65–363 (PIVLIEHALT…SPTGHDGFLI (299 aa)) form the AB hydrolase-1 domain. Ser-160 (nucleophile) is an active-site residue. Position 230 (Arg-230) interacts with substrate. Catalysis depends on residues Asp-328 and His-358. Asp-359 is a binding site for substrate.

The protein belongs to the AB hydrolase superfamily. MetX family. Homodimer.

The protein resides in the cytoplasm. It catalyses the reaction L-homoserine + acetyl-CoA = O-acetyl-L-homoserine + CoA. It participates in amino-acid biosynthesis; L-methionine biosynthesis via de novo pathway; O-acetyl-L-homoserine from L-homoserine: step 1/1. Transfers an acetyl group from acetyl-CoA to L-homoserine, forming acetyl-L-homoserine. The sequence is that of Homoserine O-acetyltransferase from Corynebacterium jeikeium (strain K411).